The sequence spans 879 residues: Exocyst complex component 1 (879 aa).

Positions 29–94 (SQYSESEYDP…ATSLGNNDGD (66 aa)) are disordered. A compositionally biased stretch (basic and acidic residues) spans 40-52 (ETTHSESDSENHH). The segment covering 64–76 (FLSQSNDNVSNGP) has biased composition (polar residues). The segment covering 77 to 91 (SNNTLSSSATSLGNN) has biased composition (low complexity). Coiled coils occupy residues 165–187 (YNKQLQDMKKYIEHIEGKNNKME) and 226–248 (KGLKMAIEAAEDLKRALTTKLKS). Disordered stretches follow at residues 371–413 (QNDF…GKDG) and 455–557 (GQRN…PDAP). Residues 373–409 (DFFSSSSSSKKSIDSLNNNTSTSTPSKNSSSSSSSSS) are compositionally biased toward low complexity. Basic residues predominate over residues 480-500 (KKSSKKDKKDKKDKKDKKDKK). Residues 519 to 532 (DSNSPKSPNNAVNG) show a composition bias toward polar residues. A compositionally biased stretch (pro residues) spans 541 to 551 (SPPPPPPPPPK).

It belongs to the SEC3 family. As to quaternary structure, the exocyst complex is composed of sec3/exoc1, sec5/exoc2, sec6/exoc3, sec8/exoc4, sec10/exoc5, sec15/exoc6, exo70/exoc7 and exo84/exoc8.

It localises to the midbody. It is found in the midbody ring. Component of the exocyst complex involved in the docking of exocytic vesicles with fusion sites on the plasma membrane. The protein is Exocyst complex component 1 (exoc1) of Dictyostelium discoideum (Social amoeba).